The chain runs to 546 residues: MAAKDVVFGDSARSKMVEGVNILANAVKVTLGPKGRNVVLERSFGGPTVTKDGVSVAKEIELKDKLQNMGAQMVKEVASKTSDNAGDGTTTATVLAQSIVREGMKYVASGMNPMDLKRGIDKAVAAAVEELKKISKPCTTNKEIAQVGSISANSDSSIGDRIAEAMDKVGKEGVITVEDGKSLADELDVVEGMQFDRGYLSPYFINNPDKQVAVLDNPFVLLHDKKVSNIRDLLPVLEQVAKAGRPLLIIAEDVEGEALATLVVNNIRGILKTVAVKAPGFGDRRKAMLEDIAILTGGQVVAEETGLTLEKATLAELGQAKRIEVGKENTTIIDGAGEAVNIEARVKQVRAQIEEATSDYDREKLQERVAKLAGGVAVIKVGAATEVEMKEKKARVEDALHATRAAVEEGIVAGGGVALIRARTAIAGLTGANADQNAGIKIVLRAMEEPLRQIVTNGGEEASVVVAAVAAGKGNYGYNAATGEYVDMVEAGVVDPTKVTRTALQNAASVAGLLLTTDAAVAELPKEDAPMPGGMPGGMGGMGMDM.

Residues 30–33 (TLGP), Lys-51, 87–91 (DGTTT), Gly-415, 479–481 (NAA), and Asp-495 contribute to the ATP site. Positions 526-546 (KEDAPMPGGMPGGMGGMGMDM) are disordered. Gly residues predominate over residues 534-546 (GMPGGMGGMGMDM).

This sequence belongs to the chaperonin (HSP60) family. Forms a cylinder of 14 subunits composed of two heptameric rings stacked back-to-back. Interacts with the co-chaperonin GroES.

It localises to the cytoplasm. It carries out the reaction ATP + H2O + a folded polypeptide = ADP + phosphate + an unfolded polypeptide.. In terms of biological role, together with its co-chaperonin GroES, plays an essential role in assisting protein folding. The GroEL-GroES system forms a nano-cage that allows encapsulation of the non-native substrate proteins and provides a physical environment optimized to promote and accelerate protein folding. The chain is Chaperonin GroEL 1 from Burkholderia cenocepacia (strain HI2424).